A 171-amino-acid chain; its full sequence is Flavodoxin (171 aa).

Residues 4-165 (IGIFFGSDTG…RIKQWVKQII (162 aa)) enclose the Flavodoxin-like domain.

Belongs to the flavodoxin family. It depends on FMN as a cofactor.

Low-potential electron donor to a number of redox enzymes. In Buchnera aphidicola subsp. Acyrthosiphon pisum (strain APS) (Acyrthosiphon pisum symbiotic bacterium), this protein is Flavodoxin (fldA).